Consider the following 575-residue polypeptide: MTEYENGKKRKVRNKQQVKVQFLSQRYLILCFCCFFVLLFFLSSDRISTLSVRSDSLRPSLRVPTLSVLSSSMDSFHRGRFPPLSVEDRVQFPDHLLLILSHGIGKGEKNLVCVYRGVKEETLVLPSISSDEFDEFRSIVRCPNAPLNYSSSVDLQFRGDLVKKKMKKQSRRVHNWEKVGYEAVIDGDTVVVFVKGLTRRPHKESDPSYYKCQFEIENSEEKEVTQAIAAAQEVVRCGLPESLKLNPEMMFRVSVIHIDPRGRTTPALPSVARIYGSDSIEKKEKKSGVKHELCVCTMLWNQAPFLREWIMYHSWLGVERWFIYDNNSDDGIQEEIELLSSENYNVSRHVWPWIKTQEAGFSHCAVRAKEECNWVGFFDVDEFYYFPTHRSQGLPSKNALKSLVSNYTSWDLVGEIRTDCHSYGPSGLTSVPSQGVTVGYTCRQANPERHKSIIRPELLTSSLLNEVHHFQLKEGVGHMSLVESVAVVNHYKYQVWDTFKAKFYRRVATYVVDWQENQNQGSKDRAPGLGTEAIEPPDWKRRFCEVWDTGLKDLVMSNFADQVTGYLPWQRQQQE.

A helical transmembrane segment spans residues 22-44 (FLSQRYLILCFCCFFVLLFFLSS). The GT92 domain maps to 293 to 540 (LCVCTMLWNQ…TEAIEPPDWK (248 aa)).

The protein belongs to the glycosyltransferase 92 family.

Its subcellular location is the membrane. The chain is Glycosyltransferase family 92 protein At1g27200 from Arabidopsis thaliana (Mouse-ear cress).